The following is a 432-amino-acid chain: Adenylosuccinate lyase (432 aa).

N(6)-(1,2-dicarboxyethyl)-AMP is bound by residues 4–5 (RY), 67–69 (RHD), and 93–94 (TS). Residue His141 is the Proton donor/acceptor of the active site. A N(6)-(1,2-dicarboxyethyl)-AMP-binding site is contributed by Gln212. The Proton donor/acceptor role is filled by Ser262. N(6)-(1,2-dicarboxyethyl)-AMP contacts are provided by residues Ser263, 268–270 (KRN), Asn276, and 307–311 (SAERI).

The protein belongs to the lyase 1 family. Adenylosuccinate lyase subfamily. Homodimer and homotetramer. Residues from neighboring subunits contribute catalytic and substrate-binding residues to each active site.

The catalysed reaction is N(6)-(1,2-dicarboxyethyl)-AMP = fumarate + AMP. The enzyme catalyses (2S)-2-[5-amino-1-(5-phospho-beta-D-ribosyl)imidazole-4-carboxamido]succinate = 5-amino-1-(5-phospho-beta-D-ribosyl)imidazole-4-carboxamide + fumarate. It functions in the pathway purine metabolism; AMP biosynthesis via de novo pathway; AMP from IMP: step 2/2. The protein operates within purine metabolism; IMP biosynthesis via de novo pathway; 5-amino-1-(5-phospho-D-ribosyl)imidazole-4-carboxamide from 5-amino-1-(5-phospho-D-ribosyl)imidazole-4-carboxylate: step 2/2. Its function is as follows. Catalyzes two reactions in de novo purine nucleotide biosynthesis. Catalyzes the breakdown of 5-aminoimidazole- (N-succinylocarboxamide) ribotide (SAICAR or 2-[5-amino-1-(5-phospho-beta-D-ribosyl)imidazole-4-carboxamido]succinate) to 5-aminoimidazole-4-carboxamide ribotide (AICAR or 5-amino-1-(5-phospho-beta-D-ribosyl)imidazole-4-carboxamide) and fumarate, and of adenylosuccinate (ADS or N(6)-(1,2-dicarboxyethyl)-AMP) to adenosine monophosphate (AMP) and fumarate. This chain is Adenylosuccinate lyase (purB), found in Streptococcus mutans serotype c (strain ATCC 700610 / UA159).